The primary structure comprises 399 residues: MSEYLFTSESVSEGHPDKVADQISDSILDAILAQDPNARVACETLCSTGLIVMSGEITTQANVDYMQVARAAVKRIGYNSSDIGFDYNTCAVLTAFNKQSPDIARGVNRTKEEEMDQGAGDQGLMFGYACDETPQLMPMPIYYAHRLMERQAELRKDGRLPWLRPDAKSQVSVRYLDGKPQRIETVVISTQHHPDISHTDLSEAIIEEVIKPVLPKKMLSGETRYLINPTGRFVVGGPMGDCGLTGRKIIVDSYGGTAHHGGGAFSGKDPSKVDRSAAYAGRYVAKNLVAAGIASRCEVQMAYAIGVARPVSLMVDTFGTGKIPDDKIVKLIERHFDLRPRGIIHGLDLLRPIYEKTAAYGHFGRDEPEFSWESTDKAAQLREEAGIEPAETEPLSLQA.

His15 contributes to the ATP binding site. A Mg(2+)-binding site is contributed by Asp17. Glu43 provides a ligand contact to K(+). L-methionine contacts are provided by Glu56 and Gln99. The flexible loop stretch occupies residues 99-109; sequence QSPDIARGVNR. ATP is bound by residues 166–168, 232–233, Asp241, 247–248, Ala264, and Lys268; these read DAK, RF, and RK. L-methionine is bound at residue Asp241. Lys272 contributes to the L-methionine binding site.

Belongs to the AdoMet synthase family. As to quaternary structure, homotetramer; dimer of dimers. The cofactor is Mg(2+). Requires K(+) as cofactor.

It localises to the cytoplasm. The enzyme catalyses L-methionine + ATP + H2O = S-adenosyl-L-methionine + phosphate + diphosphate. The protein operates within amino-acid biosynthesis; S-adenosyl-L-methionine biosynthesis; S-adenosyl-L-methionine from L-methionine: step 1/1. Its function is as follows. Catalyzes the formation of S-adenosylmethionine (AdoMet) from methionine and ATP. The overall synthetic reaction is composed of two sequential steps, AdoMet formation and the subsequent tripolyphosphate hydrolysis which occurs prior to release of AdoMet from the enzyme. This chain is S-adenosylmethionine synthase, found in Nitrosospira multiformis (strain ATCC 25196 / NCIMB 11849 / C 71).